Here is a 390-residue protein sequence, read N- to C-terminus: S-adenosylmethionine synthase 4 (390 aa).

A Mg(2+)-binding site is contributed by Glu9. ATP is bound at residue His15. Glu43 lines the K(+) pocket. The L-methionine site is built by Glu56 and Gln99. ATP contacts are provided by residues Asp167–Lys169, Ser235–Phe238, Asp246, Arg252–Lys253, Ala269, Lys273, and Lys277. Asp246 contributes to the L-methionine binding site. Lys277 contacts L-methionine.

This sequence belongs to the AdoMet synthase family. As to quaternary structure, homotetramer. Requires Mn(2+) as cofactor. Mg(2+) serves as cofactor. Co(2+) is required as a cofactor. It depends on K(+) as a cofactor. Mostly expressed in flowers, seedpods and roots, and, to a lower extent, in stems and leaves.

The protein resides in the cytoplasm. The enzyme catalyses L-methionine + ATP + H2O = S-adenosyl-L-methionine + phosphate + diphosphate. Its pathway is amino-acid biosynthesis; S-adenosyl-L-methionine biosynthesis; S-adenosyl-L-methionine from L-methionine: step 1/1. Functionally, catalyzes the formation of S-adenosylmethionine from methionine and ATP. The reaction comprises two steps that are both catalyzed by the same enzyme: formation of S-adenosylmethionine (AdoMet) and triphosphate, and subsequent hydrolysis of the triphosphate. The chain is S-adenosylmethionine synthase 4 (MSAMS4) from Brassica juncea (Indian mustard).